The primary structure comprises 177 residues: Inorganic pyrophosphatase (177 aa).

3 residues coordinate substrate: Lys31, Arg45, and Tyr57. Residues Asp67, Asp72, and Asp104 each coordinate Mg(2+). Tyr142 serves as a coordination point for substrate.

It belongs to the PPase family. As to quaternary structure, homohexamer. Mg(2+) is required as a cofactor.

The protein resides in the cytoplasm. It carries out the reaction diphosphate + H2O = 2 phosphate + H(+). Its function is as follows. Catalyzes the hydrolysis of inorganic pyrophosphate (PPi) forming two phosphate ions. This chain is Inorganic pyrophosphatase, found in Neisseria meningitidis serogroup B (strain ATCC BAA-335 / MC58).